The sequence spans 444 residues: Chromosome partition protein MukF (444 aa).

The tract at residues 212–240 (LDETSGNLRELQDTLNAAGDKLQAQLLRI) is leucine-zipper.

The protein belongs to the MukF family. As to quaternary structure, interacts, and probably forms a ternary complex, with MukE and MukB via its C-terminal region. The complex formation is stimulated by calcium or magnesium. It is required for an interaction between MukE and MukB.

The protein resides in the cytoplasm. It is found in the nucleoid. Functionally, involved in chromosome condensation, segregation and cell cycle progression. May participate in facilitating chromosome segregation by condensation DNA from both sides of a centrally located replisome during cell division. Not required for mini-F plasmid partitioning. Probably acts via its interaction with MukB and MukE. Overexpression results in anucleate cells. It has a calcium binding activity. The chain is Chromosome partition protein MukF from Haemophilus influenzae (strain PittEE).